The sequence spans 390 residues: Lipid-A-disaccharide synthase (390 aa).

This sequence belongs to the LpxB family.

It catalyses the reaction a lipid X + a UDP-2-N,3-O-bis[(3R)-3-hydroxyacyl]-alpha-D-glucosamine = a lipid A disaccharide + UDP + H(+). It participates in bacterial outer membrane biogenesis; LPS lipid A biosynthesis. Its function is as follows. Condensation of UDP-2,3-diacylglucosamine and 2,3-diacylglucosamine-1-phosphate to form lipid A disaccharide, a precursor of lipid A, a phosphorylated glycolipid that anchors the lipopolysaccharide to the outer membrane of the cell. This Haemophilus influenzae (strain PittEE) protein is Lipid-A-disaccharide synthase.